The following is a 122-amino-acid chain: Basic phospholipase A2 F15 (122 aa).

7 disulfide bridges follow: Cys26/Cys115, Cys28/Cys44, Cys43/Cys95, Cys49/Cys122, Cys50/Cys88, Cys57/Cys81, and Cys75/Cys86. The Ca(2+) site is built by Tyr27, Gly29, and Gly31. His47 is a catalytic residue. Asp48 contributes to the Ca(2+) binding site. The active site involves Asp89.

This sequence belongs to the phospholipase A2 family. Group II subfamily. D49 sub-subfamily. In terms of assembly, when this protein is associated with crotapotin (F5 or F7), it forms the crotoxin protein. Requires Ca(2+) as cofactor. Expressed by the venom gland.

The protein resides in the secreted. The enzyme catalyses a 1,2-diacyl-sn-glycero-3-phosphocholine + H2O = a 1-acyl-sn-glycero-3-phosphocholine + a fatty acid + H(+). Its activity is regulated as follows. Activated by heparin. Inhibited by its chaperone crotapotin. Functionally, snake venom phospholipase A2 (PLA2) that shows moderate neurotoxic activity in isolated mouse phrenic nerve diaphragm but shows high neurotoxic activity in a chick biventer cervis preparation. Also shows a high bactericidal effect against both Gram-negative and Gram-positive bacteria. PLA2 catalyzes the calcium-dependent hydrolysis of the 2-acyl groups in 3-sn-phosphoglycerides. The sequence is that of Basic phospholipase A2 F15 from Crotalus durissus terrificus (South American rattlesnake).